We begin with the raw amino-acid sequence, 1015 residues long: Probable beta-galactosidase B (1015 aa).

The signal sequence occupies residues 1 to 20 (MAHIYRLLLLLLSNLWFSTA). N23 carries N-linked (GlcNAc...) asparagine glycosylation. Y90 contacts substrate. N-linked (GlcNAc...) asparagine glycosylation is found at N99 and N100. Positions 135, 136, and 137 each coordinate substrate. A glycan (N-linked (GlcNAc...) asparagine) is linked at N172. N195 contacts substrate. E196 functions as the Proton donor in the catalytic mechanism. The N-linked (GlcNAc...) asparagine glycan is linked to N211. Y265 is a substrate binding site. C271 and C324 are joined by a disulfide. E308 functions as the Nucleophile in the catalytic mechanism. Y373 is a binding site for substrate. N-linked (GlcNAc...) asparagine glycosylation is found at N411, N456, N554, N679, N735, N775, and N821.

The protein belongs to the glycosyl hydrolase 35 family.

It is found in the secreted. It catalyses the reaction Hydrolysis of terminal non-reducing beta-D-galactose residues in beta-D-galactosides.. In terms of biological role, cleaves beta-linked terminal galactosyl residues from gangliosides, glycoproteins, and glycosaminoglycans. In Aspergillus fumigatus (strain CBS 144.89 / FGSC A1163 / CEA10) (Neosartorya fumigata), this protein is Probable beta-galactosidase B (lacB).